The following is a 235-amino-acid chain: DnaA regulatory inactivator Hda (235 aa).

The protein belongs to the DnaA family. HdA subfamily. The active form seems to be an ADP-bound monomer. Forms the RIDA complex (regulatory inactivation of DnaA) of ATP-DnaA, ADP-Hda and the DNA-loaded beta sliding clamp (dnaN).

Functionally, mediates the interaction of DNA replication initiator protein DnaA with DNA polymerase subunit beta sliding clamp (dnaN). Stimulates hydrolysis of ATP-DnaA to ADP-DnaA, rendering DnaA inactive for reinitiation, a process called regulatory inhibition of DnaA or RIDA. The chain is DnaA regulatory inactivator Hda from Yersinia pestis bv. Antiqua (strain Antiqua).